We begin with the raw amino-acid sequence, 240 residues long: UPF0502 protein Veis_2102 (240 aa).

This sequence belongs to the UPF0502 family.

In Verminephrobacter eiseniae (strain EF01-2), this protein is UPF0502 protein Veis_2102.